Reading from the N-terminus, the 166-residue chain is Putative transmembrane protein ORF166 (166 aa).

Transmembrane regions (helical) follow at residues 35 to 55 (IILV…FAGL), 60 to 80 (PICV…FVTA), and 124 to 144 (IFCL…AFIN).

It is found in the host membrane. The polypeptide is Putative transmembrane protein ORF166 (Acidianus convivator (ABV)).